A 551-amino-acid polypeptide reads, in one-letter code: Eukaryotic translation initiation factor 3 subunit D-2 (551 aa).

The interval Arg108 to Arg152 is disordered. Residues Arg115 to Thr136 show a composition bias toward low complexity. Residues Gln290–Pro304 are RNA gate. Residues Pro527–Asn551 are disordered.

This sequence belongs to the eIF-3 subunit D family. In terms of assembly, component of the eukaryotic translation initiation factor 3 (eIF-3) complex. The eIF-3 complex interacts with pix.

The protein localises to the cytoplasm. Functionally, mRNA cap-binding component of the eukaryotic translation initiation factor 3 (eIF-3) complex, which is involved in protein synthesis of a specialized repertoire of mRNAs and, together with other initiation factors, stimulates binding of mRNA and methionyl-tRNAi to the 40S ribosome. The eIF-3 complex specifically targets and initiates translation of a subset of mRNAs involved in cell proliferation. In the eIF-3 complex, eif3d specifically recognizes and binds the 7-methylguanosine cap of a subset of mRNAs. The chain is Eukaryotic translation initiation factor 3 subunit D-2 from Drosophila simulans (Fruit fly).